A 447-amino-acid chain; its full sequence is Hydroxymethylglutaryl-CoA synthase (447 aa).

The Proton donor/acceptor role is filled by Glu-86. The active-site Acyl-thioester intermediate is the Cys-118. Positions 118, 156, 160, 210, 250, 259, 327, and 361 each coordinate (3S)-3-hydroxy-3-methylglutaryl-CoA. The Proton donor/acceptor role is filled by His-250. Thr-398 is subject to Phosphothreonine.

Belongs to the thiolase-like superfamily. HMG-CoA synthase family.

The enzyme catalyses acetoacetyl-CoA + acetyl-CoA + H2O = (3S)-3-hydroxy-3-methylglutaryl-CoA + CoA + H(+). It functions in the pathway metabolic intermediate biosynthesis; (R)-mevalonate biosynthesis; (R)-mevalonate from acetyl-CoA: step 2/3. In terms of biological role, hydroxymethylglutaryl-CoA synthase; part of the first module of ergosterol biosynthesis pathway that includes the early steps of the pathway, conserved across all eukaryotes, and which results in the formation of mevalonate from acetyl-coenzyme A (acetyl-CoA). Hcs1 condenses acetyl-CoA with acetoacetyl-CoA to form hydroxymethylglutaryl-CoA (HMG-CoA). The first module starts with the action of the cytosolic acetyl-CoA acetyltransferase eg10 that catalyzes the formation of acetoacetyl-CoA. The hydroxymethylglutaryl-CoA synthases erg13 then condenses acetyl-CoA with acetoacetyl-CoA to form HMG-CoA. The rate-limiting step of the early module is the reduction to mevalonate by the 3-hydroxy-3-methylglutaryl-coenzyme A (HMG-CoA) reductases hcs1. In Schizosaccharomyces pombe (strain 972 / ATCC 24843) (Fission yeast), this protein is Hydroxymethylglutaryl-CoA synthase.